The following is a 309-amino-acid chain: Low-density lipoprotein receptor-related protein 1 (309 aa).

The protein belongs to the LDLR family.

It localises to the endoplasmic reticulum. Its subcellular location is the golgi apparatus. The protein resides in the endosome. Functionally, involved in endocytosis, fatty acid beta-oxidation and infectious growth. Plays a critical role in the accumulation of MSN2 from the cytosol to the nucleus by activating the cyclic AMP signaling pathway. MSN2 can then target the dienoyl-coenzyme A isomerase DCI1 and other genes involved in fatty acid beta-oxidation, which is important for lipid droplets degradation and infectious growth. The chain is Low-density lipoprotein receptor-related protein 1 from Pyricularia oryzae (strain 70-15 / ATCC MYA-4617 / FGSC 8958) (Rice blast fungus).